A 166-amino-acid polypeptide reads, in one-letter code: NAD(P)H-quinone oxidoreductase subunit I, chloroplastic (166 aa).

4Fe-4S ferredoxin-type domains follow at residues 55–84 and 95–124; these read GRIHFEFDKCIACEVCVRVCPIDLPVVDWK and LNYSIDFGICIFCGNCVEYCPTNCLSMTEE. Positions 64, 67, 70, 74, 104, 107, 110, and 114 each coordinate [4Fe-4S] cluster.

It belongs to the complex I 23 kDa subunit family. NDH is composed of at least 16 different subunits, 5 of which are encoded in the nucleus. [4Fe-4S] cluster is required as a cofactor.

The protein resides in the plastid. Its subcellular location is the chloroplast thylakoid membrane. It catalyses the reaction a plastoquinone + NADH + (n+1) H(+)(in) = a plastoquinol + NAD(+) + n H(+)(out). The catalysed reaction is a plastoquinone + NADPH + (n+1) H(+)(in) = a plastoquinol + NADP(+) + n H(+)(out). NDH shuttles electrons from NAD(P)H:plastoquinone, via FMN and iron-sulfur (Fe-S) centers, to quinones in the photosynthetic chain and possibly in a chloroplast respiratory chain. The immediate electron acceptor for the enzyme in this species is believed to be plastoquinone. Couples the redox reaction to proton translocation, and thus conserves the redox energy in a proton gradient. This is NAD(P)H-quinone oxidoreductase subunit I, chloroplastic from Parthenium hysterophorus (Santa Maria feverfew).